A 1033-amino-acid chain; its full sequence is MEKVDVKESAVGREMRIRKQWNEQNIFEQSIQNREGAQSFVFYEGPPTANGLPHVGHALGRTIKDLVARYKTMAGYKVLRKAGWDTHGLPVELGVEKQLGISGKHEIEEYGIEPFIQKCKESVFTYEKQWREFTESIGYWVDMDDPYVTLKNPYIESVWHILGTIHEKGLLYKGHRVSPYCPSCQTSLSSHEVAQGYKTVKDLSATVKFKVKDSENEYFLGWTTTPWTLPANVALAVHPNMEYVKAKQESHVYIVAKERVQEVLKENYEVLSVHKGEELLNTSYTAPFPMKEVTNGYRVIAADFVTGDSGTGLVHIAPAYGEDDYRVVQSEGLSFLHVVDEKGEYTEAVPFLKGKFVKDCDVDIVRYLAKEGLLYHKEKYEHSYPHCWRCDSPLLYYAGESWLIRTTAIKDTFLQNNDSVTWYPDHMKHGRFGKFLENMVDWNISRNRYWGTPLNVWECESCDHQFAPKSIAELRKHSTKETPEDLELHKPYVDEVQVCCGKCGGTMNRTPEVIDVWFDSGSMPFAQYHYPFENKELFEEQFPADVIAEGIDQTRGWFYSLLAVSALYTGKVPYKRVLSLGHVLDEEGQKMSKSKGNALDPVDLVDKFGADALRWALLVDSAPWNAKRFSERTVLEAKSKFVDTLVNVYSFYVLYANLDEYNPKETYDVKLTKLDEWVLSRLHSTTKKVRTALDDYQFTNAAREIAALVDEVSNWYVRRSRNRFWESGMNAEKAAAYETLHEVLVTISKLIAPFTPFVAEDIHLNLEGSSVHLADYPVVNESLLQPKLEAEMDAVLQVVELGRSNRNQHSLKVKQPLAELVLLEHNENDMDWESYRDIVMDELNVKAFHVELDETKYTSYQLKLNFKTAGPKFGKNVNAVNGWLKQLSQEEVQNFVSTGRAVYEATPEGEVVVTGEDVLVEKVAKSGFSNTTNGQYTVMLDTNVTEELLQEGVAREFIRAVQEYRKQLNLPVNLRVDIILDTEEELQRTLTNHKDLLEENLLVKQFTFGHLTNEDDELSLGETKLRIKLSAAN.

The 'HIGH' region motif lies at 47-57 (PTANGLPHVGH). Residues 590-594 (KMSKS) carry the 'KMSKS' region motif. K593 contributes to the ATP binding site.

It belongs to the class-I aminoacyl-tRNA synthetase family. IleS type 2 subfamily. Monomer. Zn(2+) is required as a cofactor.

It is found in the cytoplasm. The catalysed reaction is tRNA(Ile) + L-isoleucine + ATP = L-isoleucyl-tRNA(Ile) + AMP + diphosphate. Its function is as follows. Catalyzes the attachment of isoleucine to tRNA(Ile). As IleRS can inadvertently accommodate and process structurally similar amino acids such as valine, to avoid such errors it has two additional distinct tRNA(Ile)-dependent editing activities. One activity is designated as 'pretransfer' editing and involves the hydrolysis of activated Val-AMP. The other activity is designated 'posttransfer' editing and involves deacylation of mischarged Val-tRNA(Ile). The protein is Isoleucine--tRNA ligase 2 of Bacillus cereus (strain ATCC 14579 / DSM 31 / CCUG 7414 / JCM 2152 / NBRC 15305 / NCIMB 9373 / NCTC 2599 / NRRL B-3711).